The sequence spans 637 residues: Biosynthetic arginine decarboxylase (637 aa).

Lys-101 is modified (N6-(pyridoxal phosphate)lysine). 286–296 is a binding site for substrate; that stretch reads VDIGGGLGVDY.

The protein belongs to the Orn/Lys/Arg decarboxylase class-II family. SpeA subfamily. Mg(2+) is required as a cofactor. Requires pyridoxal 5'-phosphate as cofactor.

It carries out the reaction L-arginine + H(+) = agmatine + CO2. It participates in amine and polyamine biosynthesis; agmatine biosynthesis; agmatine from L-arginine: step 1/1. Functionally, catalyzes the biosynthesis of agmatine from arginine. In Marinobacter nauticus (strain ATCC 700491 / DSM 11845 / VT8) (Marinobacter aquaeolei), this protein is Biosynthetic arginine decarboxylase.